Reading from the N-terminus, the 249-residue chain is NADH-quinone oxidoreductase subunit C (249 aa).

The segment at 1–29 (MTENQTTPDPGEPGSSADRPGGLVPTGDS) is disordered.

The protein belongs to the complex I 30 kDa subunit family. NDH-1 is composed of 14 different subunits. Subunits NuoB, C, D, E, F, and G constitute the peripheral sector of the complex.

The protein resides in the cell membrane. It carries out the reaction a quinone + NADH + 5 H(+)(in) = a quinol + NAD(+) + 4 H(+)(out). NDH-1 shuttles electrons from NADH, via FMN and iron-sulfur (Fe-S) centers, to quinones in the respiratory chain. The immediate electron acceptor for the enzyme in this species is believed to be a menaquinone. Couples the redox reaction to proton translocation (for every two electrons transferred, four hydrogen ions are translocated across the cytoplasmic membrane), and thus conserves the redox energy in a proton gradient. The protein is NADH-quinone oxidoreductase subunit C of Saccharopolyspora erythraea (strain ATCC 11635 / DSM 40517 / JCM 4748 / NBRC 13426 / NCIMB 8594 / NRRL 2338).